The sequence spans 95 residues: Alpha-defensin 20 (95 aa).

The signal sequence occupies residues 1 to 19; sequence MKTLVLLSALVLLAFQVQA. Positions 20 to 58 are excised as a propeptide; that stretch reads DPIQNTDEETNTEEQPGEEDQAVSVSFGDPEGSALHEKS. The interval 22 to 57 is disordered; the sequence is IQNTDEETNTEEQPGEEDQAVSVSFGDPEGSALHEK. Positions 25 to 40 are enriched in acidic residues; that stretch reads TDEETNTEEQPGEEDQ. Intrachain disulfides connect C64/C89, C66/C81, and C71/C88.

The protein belongs to the alpha-defensin family.

Its subcellular location is the secreted. Functionally, may have microbicidal activities. This is Alpha-defensin 20 (Defa20) from Mus musculus (Mouse).